Consider the following 204-residue polypeptide: MTKYTFKPKDFKAFNVEGLDARMEALNEYIRPQLHELGEYFSDFFTSQTGETFYPHVAKHARRSVNPPKDTWVAFATNKRGYKMLPHFQIGMFEDQLFVMFGIMHEAKDKATRAKVFERNFKAIQQLPDDYRVCLDHMKPDKPFIKDLTDDDLKEAIQRAINVKKGEFFIARAITPQDKRLKSDKAFIAFLEETFDQFLPFYSA.

It belongs to the UPF0637 family.

The protein is UPF0637 protein SAS1041 of Staphylococcus aureus (strain MSSA476).